The primary structure comprises 188 residues: Ribosomal RNA small subunit methyltransferase G (188 aa).

S-adenosyl-L-methionine is bound by residues Gly-69, Phe-74, Val-119 to Gln-120, and Arg-134.

It belongs to the methyltransferase superfamily. RNA methyltransferase RsmG family.

The protein localises to the cytoplasm. The catalysed reaction is guanosine(527) in 16S rRNA + S-adenosyl-L-methionine = N(7)-methylguanosine(527) in 16S rRNA + S-adenosyl-L-homocysteine. Specifically methylates the N7 position of guanine in position 527 of 16S rRNA. The sequence is that of Ribosomal RNA small subunit methyltransferase G from Campylobacter jejuni (strain RM1221).